Reading from the N-terminus, the 638-residue chain is Ubiquitin-like-specific protease 2 (638 aa).

Positions 1–12 are enriched in basic and acidic residues; that stretch reads MRDSKDALDDKS. 2 disordered regions span residues 1–79 and 238–314; these read MRDS…PKHL and PQKT…TSND. The segment covering 238–249 has biased composition (polar residues); sequence PQKTVRSIVKQT. Over residues 250–264 the composition is skewed to low complexity; the sequence is SSPHSSKMPKHSLPS. Residues 267–314 show a composition bias toward polar residues; it reads TPFNSNSGDSLLSRIKNSNQSSSERPTANNGAQEQNQSSSSAGNTSND. Residues H440 and D494 contribute to the active site. Phosphothreonine is present on T526. The active site involves C544. The span at 610-619 shows a compositional bias: polar residues; the sequence is NERQSLSSGS. The tract at residues 610-638 is disordered; the sequence is NERQSLSSGSNDEEDKENDDDLAILPITN. Positions 620–631 are enriched in acidic residues; that stretch reads NDEEDKENDDDL.

It belongs to the peptidase C48 family.

It is found in the nucleus. This Schizosaccharomyces pombe (strain 972 / ATCC 24843) (Fission yeast) protein is Ubiquitin-like-specific protease 2 (ulp2).